Here is a 152-residue protein sequence, read N- to C-terminus: Ribosome maturation factor RimP (152 aa).

This sequence belongs to the RimP family.

The protein localises to the cytoplasm. Its function is as follows. Required for maturation of 30S ribosomal subunits. The protein is Ribosome maturation factor RimP of Ectopseudomonas mendocina (strain ymp) (Pseudomonas mendocina).